The following is a 505-amino-acid chain: Histidine ammonia-lyase (505 aa).

Residues 141-143 (ASG) constitute a cross-link (5-imidazolinone (Ala-Gly)). Ser142 carries the post-translational modification 2,3-didehydroalanine (Ser).

The protein belongs to the PAL/histidase family. Contains an active site 4-methylidene-imidazol-5-one (MIO), which is formed autocatalytically by cyclization and dehydration of residues Ala-Ser-Gly.

Its subcellular location is the cytoplasm. The enzyme catalyses L-histidine = trans-urocanate + NH4(+). The protein operates within amino-acid degradation; L-histidine degradation into L-glutamate; N-formimidoyl-L-glutamate from L-histidine: step 1/3. The sequence is that of Histidine ammonia-lyase from Bacillus mycoides (strain KBAB4) (Bacillus weihenstephanensis).